Here is an 841-residue protein sequence, read N- to C-terminus: Protein translocase subunit SecA (841 aa).

ATP is bound by residues Q86, 104-108 (GEGKT), and D493. The segment at 788 to 822 (EEVAEGKAVRPSANGQEDKKAKRKPVRKAENIGRN) is disordered. Zn(2+) contacts are provided by C825, C827, C836, and C837.

It belongs to the SecA family. Monomer and homodimer. Part of the essential Sec protein translocation apparatus which comprises SecA, SecYEG and auxiliary proteins SecDF. Other proteins may also be involved. Zn(2+) serves as cofactor.

Its subcellular location is the cell membrane. The protein localises to the cytoplasm. The enzyme catalyses ATP + H2O + cellular proteinSide 1 = ADP + phosphate + cellular proteinSide 2.. Functionally, part of the Sec protein translocase complex. Interacts with the SecYEG preprotein conducting channel. Has a central role in coupling the hydrolysis of ATP to the transfer of proteins into and across the cell membrane, serving as an ATP-driven molecular motor driving the stepwise translocation of polypeptide chains across the membrane. The protein is Protein translocase subunit SecA of Shouchella clausii (strain KSM-K16) (Alkalihalobacillus clausii).